We begin with the raw amino-acid sequence, 507 residues long: Archaeal-type glutamate synthase [NADPH] (507 aa).

4Fe-4S ferredoxin-type domains are found at residues 10–39 (FVVE…YDEN) and 41–70 (NRVY…VRRN). Positions 19, 22, 25, 29, 50, 53, 56, and 60 each coordinate [4Fe-4S] cluster.

Belongs to the glutamate synthase family. It depends on FMN as a cofactor.

The enzyme catalyses 2 L-glutamate + NADP(+) = L-glutamine + 2-oxoglutarate + NADPH + H(+). The protein is Archaeal-type glutamate synthase [NADPH] of Thermotoga neapolitana (strain ATCC 49049 / DSM 4359 / NBRC 107923 / NS-E).